The primary structure comprises 507 residues: Protein MosB (507 aa).

A DNA-binding region (H-T-H motif) is located at residues 256–275; sequence QAHGALYKGQHVGLLSDIGC. Lys282 carries the post-translational modification N6-(pyridoxal phosphate)lysine.

It belongs to the DegT/DnrJ/EryC1 family.

Involved in the biosynthesis of the rhizopine 3-O-methyl-scyllo-inosamine. May have a regulatory role in controlling the housekeeping genes within the nodule which are involved in the biosynthesis of the rhizopine backbone. The sequence is that of Protein MosB (mosB) from Rhizobium meliloti (Ensifer meliloti).